The chain runs to 236 residues: ATP synthase subunit a (236 aa).

A run of 5 helical transmembrane segments spans residues 17-37 (WTNL…LFGL), 76-96 (SFFV…GLII), 113-133 (PVVT…AGVA), 170-190 (IFGN…MAFS), and 196-216 (MIVS…IGAI).

Belongs to the ATPase A chain family. In terms of assembly, F-type ATPases have 2 components, CF(1) - the catalytic core - and CF(0) - the membrane proton channel. CF(1) has five subunits: alpha(3), beta(3), gamma(1), delta(1), epsilon(1). CF(0) has three main subunits: a(1), b(2) and c(9-12). The alpha and beta chains form an alternating ring which encloses part of the gamma chain. CF(1) is attached to CF(0) by a central stalk formed by the gamma and epsilon chains, while a peripheral stalk is formed by the delta and b chains.

The protein localises to the cell membrane. Functionally, key component of the proton channel; it plays a direct role in the translocation of protons across the membrane. The sequence is that of ATP synthase subunit a from Limosilactobacillus fermentum (strain NBRC 3956 / LMG 18251) (Lactobacillus fermentum).